The following is a 370-amino-acid chain: Cytochrome b (370 aa).

The next 4 helical transmembrane spans lie at 25 to 45, 69 to 90, 105 to 125, and 170 to 190; these read FGSMLLACLTLQLLTGFFLAV, WMMQNLHAIGASMFFICIYIHI, WLSGTTLLIMLMATAFFGYVL, and FFALHFILPFGIISLSSLHIL. Heme b is bound by residues His-75 and His-89. Residues His-174 and His-188 each coordinate heme b. His-193 serves as a coordination point for a ubiquinone. Transmembrane regions (helical) follow at residues 218-238, 280-300, 312-332, and 339-358; these read YKDMLMLTIMTIMLLTIVSFF, LGGALALTMSIMMLLTLPFTH, FMQLTFWTFTATFLVISWTAT, and FTTISQVAALMYFLFFISNP.

It belongs to the cytochrome b family. The cytochrome bc1 complex contains 3 respiratory subunits (MT-CYB, CYC1 and UQCRFS1), 2 core proteins (UQCRC1 and UQCRC2) and probably 6 low-molecular weight proteins. Requires heme b as cofactor.

It localises to the mitochondrion inner membrane. Component of the ubiquinol-cytochrome c reductase complex (complex III or cytochrome b-c1 complex) that is part of the mitochondrial respiratory chain. The b-c1 complex mediates electron transfer from ubiquinol to cytochrome c. Contributes to the generation of a proton gradient across the mitochondrial membrane that is then used for ATP synthesis. The sequence is that of Cytochrome b (MT-CYB) from Chilabothrus strigilatus fosteri (Bimini Island boa constrictor).